The following is a 67-amino-acid chain: ATP synthase F(0) complex subunit 8 (67 aa).

A helical membrane pass occupies residues 8 to 24 (TWFITIISSMITLFILF). An N6-acetyllysine; alternate modification is found at lysine 54. An N6-succinyllysine; alternate modification is found at lysine 54. An N6-acetyllysine modification is found at lysine 57.

It belongs to the ATPase protein 8 family. In terms of assembly, component of the ATP synthase complex composed at least of ATP5F1A/subunit alpha, ATP5F1B/subunit beta, ATP5MC1/subunit c (homooctomer), MT-ATP6/subunit a, MT-ATP8/subunit 8, ATP5ME/subunit e, ATP5MF/subunit f, ATP5MG/subunit g, ATP5MK/subunit k, ATP5MJ/subunit j, ATP5F1C/subunit gamma, ATP5F1D/subunit delta, ATP5F1E/subunit epsilon, ATP5PF/subunit F6, ATP5PB/subunit b, ATP5PD/subunit d, ATP5PO/subunit OSCP. ATP synthase complex consists of a soluble F(1) head domain (subunits alpha(3) and beta(3)) - the catalytic core - and a membrane F(0) domain - the membrane proton channel (subunits c, a, 8, e, f, g, k and j). These two domains are linked by a central stalk (subunits gamma, delta, and epsilon) rotating inside the F1 region and a stationary peripheral stalk (subunits F6, b, d, and OSCP). Interacts with PRICKLE3.

It is found in the mitochondrion membrane. Its function is as follows. Subunit 8, of the mitochondrial membrane ATP synthase complex (F(1)F(0) ATP synthase or Complex V) that produces ATP from ADP in the presence of a proton gradient across the membrane which is generated by electron transport complexes of the respiratory chain. ATP synthase complex consist of a soluble F(1) head domain - the catalytic core - and a membrane F(1) domain - the membrane proton channel. These two domains are linked by a central stalk rotating inside the F(1) region and a stationary peripheral stalk. During catalysis, ATP synthesis in the catalytic domain of F(1) is coupled via a rotary mechanism of the central stalk subunits to proton translocation. In vivo, can only synthesize ATP although its ATP hydrolase activity can be activated artificially in vitro. Part of the complex F(0) domain. This chain is ATP synthase F(0) complex subunit 8, found in Mus musculus (Mouse).